A 604-amino-acid chain; its full sequence is uncharacterized protein (604 aa).

The 285-residue stretch at 45–329 folds into the ABC transmembrane type-1 domain; sequence LPLSFLTVLI…LGQVYNQLLM (285 aa). A run of 6 helical transmembrane segments spans residues 49 to 69, 82 to 102, 162 to 182, 184 to 204, 273 to 293, and 297 to 317; these read FLTV…IGVY, LLIQ…AANV, VINL…LFTL, PELT…STSL, LVEM…ATLI, and TITI…WEPI. Residues 363-597 form the ABC transporter domain; it reads ISFEEVEFSY…GGIYAGLVKA (235 aa). 396–403 is a binding site for ATP; sequence GHTGSGKT.

This sequence belongs to the ABC transporter superfamily.

It localises to the cell membrane. This is an uncharacterized protein from Bacillus subtilis (strain 168).